A 221-amino-acid polypeptide reads, in one-letter code: Retinitis pigmentosa 9 protein (221 aa).

3 stretches are compositionally biased toward basic and acidic residues: residues Met-1–Val-10, Arg-17–Arg-29, and Ile-60–Asp-69. Residues Met-1–Gly-76 form a disordered region. The segment at Met-1–Val-155 is PIM1-binding. The CCHC-type zinc finger occupies Gln-104–Phe-122. Lys-129 is covalently cross-linked (Glycyl lysine isopeptide (Lys-Gly) (interchain with G-Cter in SUMO2)). The span at Asp-147–Arg-156 shows a compositional bias: basic and acidic residues. Residues Asp-147 to Glu-221 are disordered. The span at Lys-184 to Ser-212 shows a compositional bias: basic residues. A phosphoserine; by PIM1 mark is found at Ser-212 and Ser-214.

As to quaternary structure, binds to PIM1. Binds to ZNHIT4. Appears to be expressed in a wide range of tissues.

Its subcellular location is the nucleus. Functionally, is thought to be a target protein for the PIM1 kinase. May play some roles in B-cell proliferation in association with PIM1. The sequence is that of Retinitis pigmentosa 9 protein (RP9) from Homo sapiens (Human).